The following is a 798-amino-acid chain: MVLEFGKGAFVVDDLRNVTIKIGEIAEEEEEWAPMGPTPMPGIATLRDWDFFLLKRYKPFYAPACDMCCLCTMGKCDLTGNKRGACGIDLAAQTGRIVTIACSIGVSAHTGHARHMLHDIEHMTGKKLSEIPVDLGPEIDEVAPLTELITGIKPKTLEDLERALRYAEEQIVQVVDAVHTGQEGSYLDYESKALHLGMLDSLGKEIADIAQICAFGYPKGEDNQPLIEVGMGVMDRSKAMILVIGHHAPPVLNIADYIEENGLEDEVDLGGICCTANDMTRYYQKAKIVSALGRQLKVIRAGLADVIVIDEQCIRADILYHTKKLGIPVICTNEKAMHALPDMTKEEPKNIIKYLLDGNPGCVILDPLKVGEVAVEVARARRKQRGDDIGPRLTEEQFMEYARACTQCGNCTIACPQGIRIGEAMEAAENGDRSKLEKEWDVCIACGRCEQVCPKGIPIIDMYNYAAWNLIVNEKGKLRRGRGPIRDSEIRNVGAPIVLGTIPGIIAVIGCGNYPNGTRDAYTIMDEFASRNYIVVTTGCMAFDAALYKDEEGQTVYEKYHDRFDGGGVVQIGSCVANAHIHGAAIKVARIFAKRNIRANYEEIADYILNRVGACGVAWGAYSQKAASIATGFNRLGIPAVVGPHGSKYRRAFLGRPYNDEDWMVYDARTGEKVRIEPAPQDLLVAAETIEEAIPLMAKLCFRPNDTTQGRSIKLTHYIDLSLKYLKRMPDDWHLFVRTEADLPLAKKEELLKELEDKHGWKIDWQKKKIVEGPIRGYHAGFNPTNLERCLRDGFMTV.

[4Fe-4S] cluster contacts are provided by Cys-65, Cys-68, Cys-69, Cys-71, Cys-76, and Cys-86. His-109 is a CO binding site. [Ni-4Fe-4S] cluster is bound by residues His-246, Cys-274, and Cys-313. 4Fe-4S ferredoxin-type domains follow at residues 395-424 and 434-463; these read EEQF…IGEA and SKLE…IDMY. [4Fe-4S] cluster is bound by residues Cys-405, Cys-408, Cys-411, Cys-415, Cys-443, Cys-446, Cys-449, and Cys-453. [Ni-4Fe-4S] cluster contacts are provided by Cys-511, Cys-540, and Cys-575.

Belongs to the Ni-containing carbon monoxide dehydrogenase family. Heterotetramer of two alpha and two epsilon subunits. The ACDS complex is made up of alpha, epsilon, beta, gamma and delta subunits with a probable stoichiometry of (alpha(2)epsilon(2))(4)-beta(8)-(gamma(1)delta(1))(8). The cofactor is [4Fe-4S] cluster. [Ni-4Fe-4S] cluster is required as a cofactor.

It carries out the reaction CO + 2 oxidized [2Fe-2S]-[ferredoxin] + H2O = 2 reduced [2Fe-2S]-[ferredoxin] + CO2 + 2 H(+). Its function is as follows. Part of the ACDS complex that catalyzes the reversible cleavage of acetyl-CoA, allowing autotrophic growth from CO(2). The alpha-epsilon subcomponent functions as a carbon monoxide dehydrogenase. The protein is Acetyl-CoA decarbonylase/synthase complex subunit alpha 2 of Archaeoglobus fulgidus (strain ATCC 49558 / DSM 4304 / JCM 9628 / NBRC 100126 / VC-16).